Consider the following 178-residue polypeptide: MGLELVTSGKNLPEEINVVIEIPKDSEPVKYEVDKASGAIFVDRILSTPMRYPCNYGYVPNTLCGDGDPADVLVVLPLPLVPGSVVRCRPVGVLRMSDEAGSDEKILAVPIEKIFSGYAHIEDIDQVSSHWMERIGHFFEHYKDLEKGKWVKLDGWGGAAEAKRILVESVERYNSDAP.

Lys-30, Arg-44, and Tyr-56 together coordinate substrate. Mg(2+) is bound by residues Asp-66, Asp-71, and Asp-103. Position 142 (Tyr-142) interacts with substrate.

Belongs to the PPase family. As to quaternary structure, homohexamer. It depends on Mg(2+) as a cofactor.

The protein localises to the cytoplasm. It catalyses the reaction diphosphate + H2O = 2 phosphate + H(+). Catalyzes the hydrolysis of inorganic pyrophosphate (PPi) forming two phosphate ions. The protein is Inorganic pyrophosphatase of Xanthomonas campestris pv. campestris (strain ATCC 33913 / DSM 3586 / NCPPB 528 / LMG 568 / P 25).